A 716-amino-acid chain; its full sequence is Fatty acid oxidation complex subunit alpha (716 aa).

Residues 1-189 (MIYQSPTIQV…KVGAVDAVVA (189 aa)) are enoyl-CoA hydratase/isomerase. Asp-296 contributes to the substrate binding site. Positions 311 to 716 (KEVNNAAVLG…AANNGSYYQA (406 aa)) are 3-hydroxyacyl-CoA dehydrogenase. NAD(+) is bound by residues Met-324, Asp-343, 400 to 402 (VVE), Lys-407, and Ser-429. His-450 (for 3-hydroxyacyl-CoA dehydrogenase activity) is an active-site residue. Asn-453 serves as a coordination point for NAD(+). Positions 500 and 660 each coordinate substrate.

It in the N-terminal section; belongs to the enoyl-CoA hydratase/isomerase family. The protein in the C-terminal section; belongs to the 3-hydroxyacyl-CoA dehydrogenase family. Heterotetramer of two alpha chains (FadB) and two beta chains (FadA).

It carries out the reaction a (3S)-3-hydroxyacyl-CoA + NAD(+) = a 3-oxoacyl-CoA + NADH + H(+). It catalyses the reaction a (3S)-3-hydroxyacyl-CoA = a (2E)-enoyl-CoA + H2O. The catalysed reaction is a 4-saturated-(3S)-3-hydroxyacyl-CoA = a (3E)-enoyl-CoA + H2O. The enzyme catalyses (3S)-3-hydroxybutanoyl-CoA = (3R)-3-hydroxybutanoyl-CoA. It carries out the reaction a (3Z)-enoyl-CoA = a 4-saturated (2E)-enoyl-CoA. It catalyses the reaction a (3E)-enoyl-CoA = a 4-saturated (2E)-enoyl-CoA. It participates in lipid metabolism; fatty acid beta-oxidation. Involved in the aerobic and anaerobic degradation of long-chain fatty acids via beta-oxidation cycle. Catalyzes the formation of 3-oxoacyl-CoA from enoyl-CoA via L-3-hydroxyacyl-CoA. It can also use D-3-hydroxyacyl-CoA and cis-3-enoyl-CoA as substrate. The chain is Fatty acid oxidation complex subunit alpha from Shewanella baltica (strain OS155 / ATCC BAA-1091).